Here is a 438-residue protein sequence, read N- to C-terminus: L-cysteine:1D-myo-inositol 2-amino-2-deoxy-alpha-D-glucopyranoside ligase (438 aa).

Positions 1-27 (MKSWSSRPVPELPGTGTAPRVHDTSTG) are disordered. C44 serves as a coordination point for Zn(2+). L-cysteinyl-5'-AMP is bound by residues 44-47 (CGIT), T59, and 82-84 (NVT). Positions 46 to 56 (ITPYDATHMGH) match the 'HIGH' region motif. The 'ERGGDP' region motif lies at 208–213 (DHGGDP). W249 contacts L-cysteinyl-5'-AMP. Residue C253 participates in Zn(2+) binding. 271-273 (GSD) contributes to the L-cysteinyl-5'-AMP binding site. H278 is a binding site for Zn(2+). An L-cysteinyl-5'-AMP-binding site is contributed by V304. Positions 310 to 314 (KMSKS) match the 'KMSKS' region motif.

Belongs to the class-I aminoacyl-tRNA synthetase family. MshC subfamily. In terms of assembly, monomer. Requires Zn(2+) as cofactor.

The enzyme catalyses 1D-myo-inositol 2-amino-2-deoxy-alpha-D-glucopyranoside + L-cysteine + ATP = 1D-myo-inositol 2-(L-cysteinylamino)-2-deoxy-alpha-D-glucopyranoside + AMP + diphosphate + H(+). In terms of biological role, catalyzes the ATP-dependent condensation of GlcN-Ins and L-cysteine to form L-Cys-GlcN-Ins. The chain is L-cysteine:1D-myo-inositol 2-amino-2-deoxy-alpha-D-glucopyranoside ligase from Kocuria rhizophila (strain ATCC 9341 / DSM 348 / NBRC 103217 / DC2201).